The primary structure comprises 125 residues: Large ribosomal subunit protein eL32 (125 aa).

Belongs to the eukaryotic ribosomal protein eL32 family.

This is Large ribosomal subunit protein eL32 (rpl32e) from Sulfolobus acidocaldarius (strain ATCC 33909 / DSM 639 / JCM 8929 / NBRC 15157 / NCIMB 11770).